Consider the following 281-residue polypeptide: CMT1A duplicated region transcript 15 protein-like protein (281 aa).

Disordered stretches follow at residues 107–131 and 150–187; these read KPAW…DQPS and AENV…HGGG. A compositionally biased stretch (basic and acidic residues) spans 108–120; it reads PAWEEPPPERALE. Low complexity predominate over residues 165–178; the sequence is STAPASRSHAAPSP. The helical transmembrane segment at 207–227 threads the bilayer; that stretch reads AGTTALLLQGLFIVLILVGYI.

It is found in the membrane. In Homo sapiens (Human), this protein is CMT1A duplicated region transcript 15 protein-like protein (CDRT15L2).